The chain runs to 412 residues: Adenosine receptor A2a (412 aa).

Topologically, residues 1-7 (MPTVGSL) are extracellular. Residues 8-32 (VYIMVELAIALLAILGNMLVCWAVW) traverse the membrane as a helical segment. The Cytoplasmic portion of the chain corresponds to 33 to 42 (LNSNLQNVTN). A helical transmembrane segment spans residues 43–66 (YFVVSLAAADIAVGVLAIPFAITI). The Extracellular portion of the chain corresponds to 67-77 (STGFCAACHGC). 3 disulfides stabilise this stretch: Cys-71/Cys-159, Cys-74/Cys-146, and Cys-77/Cys-166. A helical membrane pass occupies residues 78–100 (LFIACFVLVLTQSSIFSLLAIAI). The Cytoplasmic segment spans residues 101 to 120 (DRYIAIRIPLRYNGLVTGTR). A helical membrane pass occupies residues 121 to 143 (AKGVIAVCWVLSFAIGLTPMLGW). The Extracellular segment spans residues 144 to 173 (NNCHHWGEGENQSQGCGEGQVACLFEDVVP). The N-linked (GlcNAc...) asparagine glycan is linked to Asn-154. Glu-169 is an adenosine binding site. The helical transmembrane segment at 174-198 (MNYMVYYNFFACVLVPLLLMLGVYL) threads the bilayer. Over 199–234 (RIFLAARRQLKQMETQPLPGERARSTLQKEVHAAKS) the chain is Cytoplasmic. A helical membrane pass occupies residues 235-258 (LAIIVGLFALCWLPLHIINCFTFF). Adenosine is bound at residue Asn-253. Cys-259 and Cys-262 form a disulfide bridge. At 259–266 (CPECPHAP) the chain is on the extracellular side. The helical transmembrane segment at 267–290 (LWLMYPAIILSHFNSVVNPFIYAY) threads the bilayer. Ser-277 and His-278 together coordinate adenosine. Over 291 to 412 (RIREFRHTFH…PLAQDGAGVS (122 aa)) the chain is Cytoplasmic. Positions 368–412 (RASARESPGDTGLPDVELLSHELHGASPESPGLEGPLAQDGAGVS) are disordered.

The protein belongs to the G-protein coupled receptor 1 family. Interacts (via cytoplasmic C-terminal domain) with USP4; the interaction is direct. May interact with DRD4. Interacts with NECAB2. Interacts (via cytoplasmic C-terminal domain) with GAS2L2; interaction enhances receptor-mediated adenylyl cyclase activity. Ubiquitinated. Deubiquitinated by USP4; leading to stabilization and expression at the cell surface.

It localises to the cell membrane. In terms of biological role, receptor for adenosine. The activity of this receptor is mediated by G proteins which activate adenylyl cyclase. This chain is Adenosine receptor A2a (ADORA2A), found in Equus caballus (Horse).